The sequence spans 262 residues: Ribosomal RNA small subunit methyltransferase G (262 aa).

Residues glycine 72, leucine 77, and arginine 142 each contribute to the S-adenosyl-L-methionine site. The disordered stretch occupies residues 212-262 (RSSQLSRAEGRKGRGDGERHDGRQVRRTARDSRRSREVDRDQPTRGQSRST). Positions 219 to 254 (AEGRKGRGDGERHDGRQVRRTARDSRRSREVDRDQP) are enriched in basic and acidic residues.

Belongs to the methyltransferase superfamily. RNA methyltransferase RsmG family.

The protein localises to the cytoplasm. Specifically methylates the N7 position of guanine in position 518 of 16S rRNA. This Frankia alni (strain DSM 45986 / CECT 9034 / ACN14a) protein is Ribosomal RNA small subunit methyltransferase G.